The chain runs to 56 residues: Large ribosomal subunit protein bL32 (56 aa).

The tract at residues 1 to 26 (MAVQQNKPTRSKRGMRRSHDSLTTAA) is disordered.

This sequence belongs to the bacterial ribosomal protein bL32 family.

In Erwinia tasmaniensis (strain DSM 17950 / CFBP 7177 / CIP 109463 / NCPPB 4357 / Et1/99), this protein is Large ribosomal subunit protein bL32.